Consider the following 475-residue polypeptide: Ribulose bisphosphate carboxylase large chain (475 aa).

The propeptide occupies Met-1 to Ser-2. Residue Pro-3 is modified to N-acetylproline. Lys-14 bears the N6,N6,N6-trimethyllysine mark. Residues Asn-123 and Thr-173 each coordinate substrate. The active-site Proton acceptor is Lys-175. Lys-177 is a substrate binding site. 3 residues coordinate Mg(2+): Lys-201, Asp-203, and Glu-204. N6-carboxylysine is present on Lys-201. His-294 acts as the Proton acceptor in catalysis. Substrate is bound by residues Arg-295, His-327, and Ser-379.

Belongs to the RuBisCO large chain family. Type I subfamily. As to quaternary structure, heterohexadecamer of 8 large chains and 8 small chains; disulfide-linked. The disulfide link is formed within the large subunit homodimers. Mg(2+) is required as a cofactor. Post-translationally, the disulfide bond which can form in the large chain dimeric partners within the hexadecamer appears to be associated with oxidative stress and protein turnover.

It localises to the plastid. The protein resides in the chloroplast. The enzyme catalyses 2 (2R)-3-phosphoglycerate + 2 H(+) = D-ribulose 1,5-bisphosphate + CO2 + H2O. It carries out the reaction D-ribulose 1,5-bisphosphate + O2 = 2-phosphoglycolate + (2R)-3-phosphoglycerate + 2 H(+). RuBisCO catalyzes two reactions: the carboxylation of D-ribulose 1,5-bisphosphate, the primary event in carbon dioxide fixation, as well as the oxidative fragmentation of the pentose substrate in the photorespiration process. Both reactions occur simultaneously and in competition at the same active site. This Pinus pinea (Italian stone pine) protein is Ribulose bisphosphate carboxylase large chain.